We begin with the raw amino-acid sequence, 434 residues long: Sodium/bile acid cotransporter 5 (434 aa).

The first 18 residues, 1 to 18 (MSGKLFIILLLLVTPGEA), serve as a signal peptide directing secretion. The Extracellular portion of the chain corresponds to 19–129 (RKSFLRFLNI…VSVFRQTEDS (111 aa)). 2 N-linked (GlcNAc...) asparagine glycosylation sites follow: Asn73 and Asn96. The helical transmembrane segment at 130 to 150 (LFQEPIHVNSSVFLLVLLMIL) threads the bilayer. Residues 151–172 (LNKCAFGCKIELQVLQTVWKRP) are Cytoplasmic-facing. Residues 173 to 193 (LPILLGAVTQFFLMPFCGFLL) form a helical membrane-spanning segment. The Extracellular portion of the chain corresponds to 194 to 195 (SQ). A helical membrane pass occupies residues 196-216 (ILGLSKAQAFGFVMTCTCPGG). Over 217 to 232 (GGGYLFALLLEGDVTL) the chain is Cytoplasmic. The helical transmembrane segment at 233–255 (AILMACTSTSLALIMMPVNSYLY) threads the bilayer. Over 256-268 (SCLLGLAGVFHVP) the chain is Extracellular. The chain crosses the membrane as a helical span at residues 269–289 (VLKIVSTLLFILTPVSIGIVI). The Cytoplasmic portion of the chain corresponds to 290–306 (KHRMPKKAVCLERVVQP). A helical transmembrane segment spans residues 307–327 (LSLTLMLVGVYLAFRMGLVFL). The Extracellular portion of the chain corresponds to 328-331 (RMAN). A helical transmembrane segment spans residues 332–352 (LEVFLLGLLVPVLGFSFGYSF). The Cytoplasmic portion of the chain corresponds to 353–365 (AKVYLLPLPVCKT). The helical transmembrane segment at 366 to 386 (VAIESGMLNSFLALAIIQLSF) threads the bilayer. The Extracellular portion of the chain corresponds to 387–395 (PQSKAYEAS). The helical transmembrane segment at 396 to 416 (VAPFTVAMCSSCEMLLLLLVY) threads the bilayer. Over 417-434 (KAKKRPLLSTENEKAPLV) the chain is Cytoplasmic.

Belongs to the bile acid:sodium symporter (BASS) (TC 2.A.28) family.

The protein resides in the membrane. The protein is Sodium/bile acid cotransporter 5 (Slc10a5) of Rattus norvegicus (Rat).